Reading from the N-terminus, the 359-residue chain is Type-1 angiotensin II receptor A (359 aa).

The Extracellular segment spans residues 1–25 (MALNSSTEDGIKRIQDDCPRAGRHS). The N-linked (GlcNAc...) asparagine glycan is linked to Asn4. Residues Gln15 and Asp17 each coordinate angiotensin II. Disulfide bonds link Cys18-Cys274 and Cys101-Cys180. The helical transmembrane segment at 26–55 (YIFVMIPTLYSIIFVVGIFGNSLVVIVIYF) threads the bilayer. Over 56–61 (YMKLKT) the chain is Cytoplasmic. The chain crosses the membrane as a helical span at residues 62–89 (VASVFLLNLALADLCFLLTLPLWAVYTA). The Extracellular segment spans residues 90–98 (MEYRWPFGN). The helical transmembrane segment at 99–125 (HLCKIASASVSFNLYASVFLLTCLSID) threads the bilayer. Residues 126–141 (RYLAIVHPMKSRLRRT) are Cytoplasmic-facing. The helical transmembrane segment at 142–165 (MLVAKVTCIIIWLMAGLASLPAVI) threads the bilayer. The Extracellular segment spans residues 166 to 190 (HRNVYFIENTNITVCAFHYESRNST). Arg167 contacts angiotensin II. Asn176 carries an N-linked (GlcNAc...) asparagine glycan. Angiotensin II is bound by residues Phe182, His183, and Tyr184. An N-linked (GlcNAc...) asparagine glycan is attached at Asn188. A helical transmembrane segment spans residues 191 to 216 (LPIGLGLTKNILGFLFPFLIILTSYT). Lys199 provides a ligand contact to angiotensin II. The Cytoplasmic portion of the chain corresponds to 217 to 239 (LIWKALKKAYEIQKNKPRNDDIF). A helical membrane pass occupies residues 240–268 (RIIMAIVLFFFFSWVPHQIFTFLDVLIQL). The Extracellular segment spans residues 269 to 278 (GVIHDCKIAD). Residues 279–304 (IVDTAMPITICIAYFNNCLNPLFYGF) form a helical membrane-spanning segment. Over 305–359 (LGKKFKKYFLQLLKYIPPKAKSHSSLSTKMSTLSYRPSDNMSSAAKKPASCSEVE) the chain is Cytoplasmic. A compositionally biased stretch (polar residues) spans 335–347 (STLSYRPSDNMSS). Residues 335-359 (STLSYRPSDNMSSAAKKPASCSEVE) are disordered. Cys355 carries S-palmitoyl cysteine lipidation.

This sequence belongs to the G-protein coupled receptor 1 family. Interacts with MAS1. Interacts with ARRB1. Interacts with FLNA (via filamin repeat 21); increases PKA-mediated phosphorylation of FLNA. C-terminal Ser or Thr residues may be phosphorylated.

Its subcellular location is the cell membrane. Its function is as follows. Receptor for angiotensin II, a vasoconstricting peptide, which acts as a key regulator of blood pressure and sodium retention by the kidney. The activated receptor in turn couples to G-alpha proteins G(q) (GNAQ, GNA11, GNA14 or GNA15) and thus activates phospholipase C and increases the cytosolic Ca(2+) concentrations, which in turn triggers cellular responses such as stimulation of protein kinase C. This chain is Type-1 angiotensin II receptor A (Agtr1a), found in Mus musculus (Mouse).